A 25-amino-acid chain; its full sequence is Mu-conotoxin CnIIIB (25 aa).

At Q1 the chain carries Pyrrolidone carboxylic acid; partial. Intrachain disulfides connect C3–C15, C4–C21, and C10–C22.

Belongs to the conotoxin M superfamily. In terms of tissue distribution, expressed by the venom duct.

It is found in the secreted. Functionally, mu-conotoxins block voltage-gated sodium channels (Nav). This synthetic toxin blocks slightly but irreversibly tetrodotoxin-resistant VGSCs. This Conus consors (Singed cone) protein is Mu-conotoxin CnIIIB.